A 141-amino-acid polypeptide reads, in one-letter code: Hemoglobin subunit alpha (141 aa).

In terms of domain architecture, Globin spans 1 to 141; sequence VLSPADKTNV…VSTVLTSKYR (141 aa). At serine 3 the chain carries Phosphoserine. Position 7 is an N6-succinyllysine (lysine 7). Threonine 8 is modified (phosphothreonine). An N6-succinyllysine modification is found at lysine 11. Lysine 16 carries the N6-acetyllysine; alternate modification. At lysine 16 the chain carries N6-succinyllysine; alternate. The residue at position 35 (serine 35) is a Phosphoserine. At lysine 40 the chain carries N6-succinyllysine. Histidine 58 provides a ligand contact to O2. Histidine 87 contributes to the heme b binding site. At serine 102 the chain carries Phosphoserine. At threonine 108 the chain carries Phosphothreonine. A phosphoserine mark is found at serine 124 and serine 131. Phosphothreonine is present on residues threonine 134 and threonine 137. Residue serine 138 is modified to Phosphoserine.

It belongs to the globin family. As to quaternary structure, heterotetramer of two alpha chains and two beta chains. In terms of tissue distribution, red blood cells.

In terms of biological role, involved in oxygen transport from the lung to the various peripheral tissues. Its function is as follows. Hemopressin acts as an antagonist peptide of the cannabinoid receptor CNR1. Hemopressin-binding efficiently blocks cannabinoid receptor CNR1 and subsequent signaling. This chain is Hemoglobin subunit alpha (HBA), found in Physeter macrocephalus (Sperm whale).